A 111-amino-acid chain; its full sequence is Phosphoribosyl-AMP cyclohydrolase (111 aa).

Position 80 (D80) interacts with Mg(2+). C81 is a binding site for Zn(2+). 2 residues coordinate Mg(2+): D82 and D84. The Zn(2+) site is built by C97 and C104.

This sequence belongs to the PRA-CH family. As to quaternary structure, homodimer. The cofactor is Mg(2+). It depends on Zn(2+) as a cofactor.

It is found in the cytoplasm. The enzyme catalyses 1-(5-phospho-beta-D-ribosyl)-5'-AMP + H2O = 1-(5-phospho-beta-D-ribosyl)-5-[(5-phospho-beta-D-ribosylamino)methylideneamino]imidazole-4-carboxamide. It participates in amino-acid biosynthesis; L-histidine biosynthesis; L-histidine from 5-phospho-alpha-D-ribose 1-diphosphate: step 3/9. Catalyzes the hydrolysis of the adenine ring of phosphoribosyl-AMP. The polypeptide is Phosphoribosyl-AMP cyclohydrolase (Mycobacterium marinum (strain ATCC BAA-535 / M)).